Here is a 108-residue protein sequence, read N- to C-terminus: Parvalbumin beta (108 aa).

EF-hand domains follow at residues 38 to 73 (KSTD…FSST) and 77 to 108 (LTAA…LVKA). 11 residues coordinate Ca(2+): Asp51, Asp53, Ser55, Phe57, Glu59, Glu62, Asp90, Asp92, Asp94, Lys96, and Glu101.

Belongs to the parvalbumin family.

In muscle, parvalbumin is thought to be involved in relaxation after contraction. It binds two calcium ions. The polypeptide is Parvalbumin beta (Graptemys geographica (Common map turtle)).